A 74-amino-acid polypeptide reads, in one-letter code: DNA-directed RNA polymerase subunit omega (74 aa).

Belongs to the RNA polymerase subunit omega family. The RNAP catalytic core consists of 2 alpha, 1 beta, 1 beta' and 1 omega subunit. When a sigma factor is associated with the core the holoenzyme is formed, which can initiate transcription.

The catalysed reaction is RNA(n) + a ribonucleoside 5'-triphosphate = RNA(n+1) + diphosphate. In terms of biological role, promotes RNA polymerase assembly. Latches the N- and C-terminal regions of the beta' subunit thereby facilitating its interaction with the beta and alpha subunits. This chain is DNA-directed RNA polymerase subunit omega, found in Hydrogenovibrio crunogenus (strain DSM 25203 / XCL-2) (Thiomicrospira crunogena).